Consider the following 166-residue polypeptide: Disulfide bond formation protein B (166 aa).

Over 1–11 (MQSFAFSTRAL) the chain is Cytoplasmic. A helical transmembrane segment spans residues 12–28 (FLGLFAVCAGLLGFGLY). Topologically, residues 29 to 46 (LQHAVGLEPCPMCIMQRY) are periplasmic. Residues Cys38 and Cys41 are joined by a disulfide bond. Residues 47–63 (AFVAIALTALVAGLHGP) traverse the membrane as a helical segment. Residues 64 to 70 (GRRGTRA) lie on the Cytoplasmic side of the membrane. The chain crosses the membrane as a helical span at residues 71 to 87 (YAAVILLLALAGGGVAL). Residues 88-143 (RQTWMQLYPPEFAECGPDLEFMLGSFPLADALPMIFQGAGDCSKVDWAFLGLSIAN) are Periplasmic-facing. Cys102 and Cys129 are disulfide-bonded. Residues 144 to 162 (WSLVCLTLVAVFAIMMIAR) traverse the membrane as a helical segment. Residues 163 to 166 (KRGG) are Cytoplasmic-facing.

This sequence belongs to the DsbB family.

It is found in the cell inner membrane. In terms of biological role, required for disulfide bond formation in some periplasmic proteins. Acts by oxidizing the DsbA protein. This is Disulfide bond formation protein B from Aromatoleum aromaticum (strain DSM 19018 / LMG 30748 / EbN1) (Azoarcus sp. (strain EbN1)).